The chain runs to 119 residues: Ribonuclease pancreatic (119 aa).

The residue at position 1 (Gln1) is a Pyrrolidone carboxylic acid. The Proton acceptor role is filled by His10. 3 cysteine pairs are disulfide-bonded: Cys25–Cys80, Cys39–Cys91, and Cys57–Cys106. Residue 40 to 44 participates in substrate binding; sequence KTRNT. His113 serves as the catalytic Proton donor.

The protein belongs to the pancreatic ribonuclease family. As to quaternary structure, monomer. Interacts with and forms tight 1:1 complexes with RNH1. Dimerization of two such complexes may occur. Interaction with RNH1 inhibits this protein. In terms of tissue distribution, pancreas.

The protein resides in the secreted. The enzyme catalyses an [RNA] containing cytidine + H2O = an [RNA]-3'-cytidine-3'-phosphate + a 5'-hydroxy-ribonucleotide-3'-[RNA].. The catalysed reaction is an [RNA] containing uridine + H2O = an [RNA]-3'-uridine-3'-phosphate + a 5'-hydroxy-ribonucleotide-3'-[RNA].. Its function is as follows. Endonuclease that catalyzes the cleavage of RNA on the 3' side of pyrimidine nucleotides. Acts on single-stranded and double-stranded RNA. In Iguana iguana (Common iguana), this protein is Ribonuclease pancreatic.